A 333-amino-acid chain; its full sequence is Syntaxin-4 (333 aa).

The Cytoplasmic portion of the chain corresponds to 1 to 312 (MGKDRLPELL…QHQKKARKKK (312 aa)). Over residues 50–66 (YSVVSQNSHSCSNNNSS) the composition is skewed to low complexity. Residues 50 to 81 (YSVVSQNSHSCSNNNSSTEPKDRSSSKMTQYG) form a disordered region. The stretch at 91–116 (YTEIRQQLAQIAANLETMNRMAQTVN) forms a coiled coil. Residues 239–301 (LREMMDRFNE…DKGADELDQA (63 aa)) enclose the t-SNARE coiled-coil homology domain. Residues 313–333 (IMLIVILAAVLLVLLLVGIYL) traverse the membrane as a helical; Anchor for type IV membrane protein segment.

The protein belongs to the syntaxin family.

It is found in the membrane. In terms of biological role, potentially involved in docking of synaptic vesicles at presynaptic active zones. The chain is Syntaxin-4 from Drosophila melanogaster (Fruit fly).